Here is a 144-residue protein sequence, read N- to C-terminus: MAQKIEGHINLNVNAGEATAAPPIGSTLGQRKVNIMEFCKAFNAATQSIEKGTPLPTVITIYVDKSFTFIVKTPPASYLIKKYAKVKKGSGATKKEAVVGKITMDDCREIAKLKMPDLNTKDIKAATKIICGSAASMGIEVVGN.

The protein belongs to the universal ribosomal protein uL11 family. Part of the ribosomal stalk of the 50S ribosomal subunit. Interacts with L10 and the large rRNA to form the base of the stalk. L10 forms an elongated spine to which L12 dimers bind in a sequential fashion forming a multimeric L10(L12)X complex. One or more lysine residues are methylated.

Functionally, forms part of the ribosomal stalk which helps the ribosome interact with GTP-bound translation factors. This is Large ribosomal subunit protein uL11 from Rickettsia bellii (strain OSU 85-389).